A 318-amino-acid chain; its full sequence is Ubiquitin-like domain-containing CTD phosphatase 1 (318 aa).

The Ubiquitin-like domain maps to 3–81 (VSVIIKWGGQ…IMMMGTREES (79 aa)). The FCP1 homology domain maps to 133-294 (PRPGKRLLVL…YKLSQYLKEI (162 aa)). Mg(2+)-binding residues include D143, D145, and D253.

Mg(2+) serves as cofactor.

It localises to the nucleus. It catalyses the reaction O-phospho-L-seryl-[protein] + H2O = L-seryl-[protein] + phosphate. The catalysed reaction is O-phospho-L-threonyl-[protein] + H2O = L-threonyl-[protein] + phosphate. Functionally, dephosphorylates 26S nuclear proteasomes, thereby decreasing their proteolytic activity. Recruited to the 19S regulatory particle of the 26S proteasome where it dephosphorylates 19S component psmc2 which impairs psmc2 ATPase activity and disrupts 26S proteasome assembly. Has also been reported to stimulate the proteolytic activity of the 26S proteasome. This Danio rerio (Zebrafish) protein is Ubiquitin-like domain-containing CTD phosphatase 1 (ublcp1).